Consider the following 214-residue polypeptide: Cdc42 effector protein 2 (214 aa).

Residue Ser2 is modified to N-acetylserine. One can recognise a CRIB domain in the interval 30-44; sequence ISPPLGDFRHTIHIG. Residues Ser31, Ser101, Ser137, Ser141, and Ser145 each carry the phosphoserine modification. The tract at residues 118–151 is disordered; that stretch reads ALTLPTTQAPPKPPRLHLESPQPSPKSSPQEAGN.

This sequence belongs to the BORG/CEP family. As to quaternary structure, interacts with CDC42 and RHOQ, in a GTP-dependent manner, and with SEPT7.

Its subcellular location is the endomembrane system. The protein resides in the cytoplasm. The protein localises to the cytoskeleton. Functionally, probably involved in the organization of the actin cytoskeleton. May act downstream of CDC42 to induce actin filament assembly leading to cell shape changes. Induces pseudopodia formation in fibroblasts in a CDC42-dependent manner. The polypeptide is Cdc42 effector protein 2 (Cdc42ep2) (Rattus norvegicus (Rat)).